Here is a 210-residue protein sequence, read N- to C-terminus: Large ribosomal subunit protein uL3 (210 aa).

Residues A133 to T152 are disordered. At Q151 the chain carries N5-methylglutamine.

It belongs to the universal ribosomal protein uL3 family. Part of the 50S ribosomal subunit. Forms a cluster with proteins L14 and L19. Post-translationally, methylated by PrmB.

One of the primary rRNA binding proteins, it binds directly near the 3'-end of the 23S rRNA, where it nucleates assembly of the 50S subunit. This is Large ribosomal subunit protein uL3 from Francisella philomiragia subsp. philomiragia (strain ATCC 25017 / CCUG 19701 / FSC 153 / O#319-036).